Here is a 422-residue protein sequence, read N- to C-terminus: Imidazolonepropionase (422 aa).

H82 and H84 together coordinate Fe(3+). Residues H82 and H84 each coordinate Zn(2+). 4-imidazolone-5-propanoate is bound by residues R91, Y154, and H187. Position 154 (Y154) interacts with N-formimidoyl-L-glutamate. H252 serves as a coordination point for Fe(3+). Residue H252 participates in Zn(2+) binding. Residue E255 coordinates 4-imidazolone-5-propanoate. Position 327 (D327) interacts with Fe(3+). D327 contacts Zn(2+). Positions 329 and 331 each coordinate N-formimidoyl-L-glutamate. Residue S332 coordinates 4-imidazolone-5-propanoate.

Belongs to the metallo-dependent hydrolases superfamily. HutI family. Requires Zn(2+) as cofactor. The cofactor is Fe(3+).

The protein resides in the cytoplasm. The catalysed reaction is 4-imidazolone-5-propanoate + H2O = N-formimidoyl-L-glutamate. Its pathway is amino-acid degradation; L-histidine degradation into L-glutamate; N-formimidoyl-L-glutamate from L-histidine: step 3/3. In terms of biological role, catalyzes the hydrolytic cleavage of the carbon-nitrogen bond in imidazolone-5-propanoate to yield N-formimidoyl-L-glutamate. It is the third step in the universal histidine degradation pathway. The chain is Imidazolonepropionase from Alkaliphilus oremlandii (strain OhILAs) (Clostridium oremlandii (strain OhILAs)).